The following is a 330-amino-acid chain: D-xylose-binding periplasmic protein (330 aa).

The first 23 residues, 1–23 (MKIKNILLTLCTSLLLTNVAAHA), serve as a signal peptide directing secretion.

The protein belongs to the bacterial solute-binding protein 2 family.

The protein resides in the periplasm. In terms of biological role, involved in the high-affinity D-xylose membrane transport system. Binds with high affinity to xylose. This chain is D-xylose-binding periplasmic protein (xylF), found in Escherichia coli (strain K12).